The chain runs to 270 residues: Coiled-coil domain-containing protein 3 (270 aa).

A signal peptide spans 1–21 (MLRQLLLAALCLAGPPAPARA). Asn-100 carries N-linked (GlcNAc...) asparagine glycosylation. A coiled-coil region spans residues 188–251 (SVQKALFEEE…NQKLSEKLAA (64 aa)).

In terms of assembly, homodimer. Expressed in umbilical vein endothelial cells (HUVEC), and at lower levels in aortic smooth muscle cells (HASMC).

Its subcellular location is the secreted. Its function is as follows. Negatively regulates TNF-alpha-induced pro-inflammatory response in endothelial cells (ECs) via inhibition of TNF-alpha-induced NF-kappaB activation in ECs. Positively regulates lipid accumulation in adipose cells. This chain is Coiled-coil domain-containing protein 3 (CCDC3), found in Homo sapiens (Human).